Reading from the N-terminus, the 160-residue chain is Nucleotide-binding protein Patl_4311 (160 aa).

Belongs to the YajQ family.

Functionally, nucleotide-binding protein. The chain is Nucleotide-binding protein Patl_4311 from Pseudoalteromonas atlantica (strain T6c / ATCC BAA-1087).